The sequence spans 602 residues: Sodium- and chloride-dependent GABA transporter 2 (602 aa).

Over Met-1–Glu-40 the chain is Cytoplasmic. 3 consecutive transmembrane segments (helical) span residues Phe-41–Leu-61, Gly-68–Leu-88, and Ile-121–Phe-141. The Extracellular portion of the chain corresponds to Ser-142–Trp-206. An intrachain disulfide couples Cys-153 to Cys-162. N-linked (GlcNAc...) asparagine glycosylation is found at Asn-169 and Asn-173. Helical transmembrane passes span Glu-207–Val-227 and Val-233–Val-253. Residue Asn-269 is glycosylated (N-linked (GlcNAc...) asparagine). 7 helical membrane passes run Ala-282–Ser-302, Phe-319–Met-339, Val-366–Leu-386, Val-418–Gly-438, Gly-453–Ala-473, Pro-490–Phe-510, and Trp-528–Trp-548. At Ser-549–His-602 the chain is on the cytoplasmic side. Thr-587 is modified (phosphothreonine). At Ser-591 the chain carries Phosphoserine.

The protein belongs to the sodium:neurotransmitter symporter (SNF) (TC 2.A.22) family. SLC6A13 subfamily.

It is found in the cell membrane. The protein localises to the basolateral cell membrane. The enzyme catalyses 4-aminobutanoate(out) + chloride(out) + 2 Na(+)(out) = 4-aminobutanoate(in) + chloride(in) + 2 Na(+)(in). It carries out the reaction taurine(out) + chloride(out) + 2 Na(+)(out) = taurine(in) + chloride(in) + 2 Na(+)(in). It catalyses the reaction beta-alanine(out) + chloride(out) + 2 Na(+)(out) = beta-alanine(in) + chloride(in) + 2 Na(+)(in). The catalysed reaction is hypotaurine(out) + chloride(out) + 2 Na(+)(out) = hypotaurine(in) + chloride(in) + 2 Na(+)(in). Mediates sodium- and chloride-dependent transport of gamma-aminobutyric acid (GABA). Can also mediate transport of beta-alanine, taurine and hypotaurine. This is Sodium- and chloride-dependent GABA transporter 2 (SLC6A13) from Bos taurus (Bovine).